Reading from the N-terminus, the 334-residue chain is Glutaminase (334 aa).

Ser-76, Asn-126, Glu-170, Asn-177, Tyr-201, Tyr-253, and Val-271 together coordinate substrate.

The protein belongs to the glutaminase family. In terms of assembly, homotetramer.

It catalyses the reaction L-glutamine + H2O = L-glutamate + NH4(+). The chain is Glutaminase from Trichormus variabilis (strain ATCC 29413 / PCC 7937) (Anabaena variabilis).